The primary structure comprises 528 residues: GMP synthase [glutamine-hydrolyzing] (528 aa).

One can recognise a Glutamine amidotransferase type-1 domain in the interval 13–204 (AIVILDFGSQ…VYDICSCEPD (192 aa)). The active-site Nucleophile is the Cys90. Catalysis depends on residues His178 and Glu180. Residues 205 to 403 (WTTNLFIDEA…LGLPDEIVRR (199 aa)) enclose the GMPS ATP-PPase domain. 232 to 238 (SGGVDSS) lines the ATP pocket.

In terms of assembly, homodimer.

The enzyme catalyses XMP + L-glutamine + ATP + H2O = GMP + L-glutamate + AMP + diphosphate + 2 H(+). It functions in the pathway purine metabolism; GMP biosynthesis; GMP from XMP (L-Gln route): step 1/1. Its function is as follows. Catalyzes the synthesis of GMP from XMP. This Prochlorococcus marinus (strain NATL1A) protein is GMP synthase [glutamine-hydrolyzing].